Here is a 286-residue protein sequence, read N- to C-terminus: 4-diphosphocytidyl-2-C-methyl-D-erythritol kinase (286 aa).

Lysine 8 is an active-site residue. ATP is bound at residue 92 to 102 (PVSAGLAGGST). Aspartate 134 is a catalytic residue.

Belongs to the GHMP kinase family. IspE subfamily.

The catalysed reaction is 4-CDP-2-C-methyl-D-erythritol + ATP = 4-CDP-2-C-methyl-D-erythritol 2-phosphate + ADP + H(+). The protein operates within isoprenoid biosynthesis; isopentenyl diphosphate biosynthesis via DXP pathway; isopentenyl diphosphate from 1-deoxy-D-xylulose 5-phosphate: step 3/6. Its function is as follows. Catalyzes the phosphorylation of the position 2 hydroxy group of 4-diphosphocytidyl-2C-methyl-D-erythritol. This is 4-diphosphocytidyl-2-C-methyl-D-erythritol kinase from Caldicellulosiruptor bescii (strain ATCC BAA-1888 / DSM 6725 / KCTC 15123 / Z-1320) (Anaerocellum thermophilum).